Reading from the N-terminus, the 199-residue chain is NAD(P)H dehydrogenase (quinone) (199 aa).

The region spanning 4–190 (ILVLYYSTYG…DGARFQGRHV (187 aa)) is the Flavodoxin-like domain. FMN-binding positions include 10–15 (STYGHI) and 78–80 (TRF). Tyrosine 12 contributes to the NAD(+) binding site. Substrate is bound at residue tryptophan 98. FMN contacts are provided by residues 113–119 (STATQHG) and histidine 134.

This sequence belongs to the WrbA family. It depends on FMN as a cofactor.

The catalysed reaction is a quinone + NADH + H(+) = a quinol + NAD(+). The enzyme catalyses a quinone + NADPH + H(+) = a quinol + NADP(+). The polypeptide is NAD(P)H dehydrogenase (quinone) (Rhizorhabdus wittichii (strain DSM 6014 / CCUG 31198 / JCM 15750 / NBRC 105917 / EY 4224 / RW1) (Sphingomonas wittichii)).